The primary structure comprises 421 residues: Subtilisin-like protease 2 (421 aa).

Residues 1–16 form the signal peptide; sequence MQLLNFGLLLLPFVAG. Positions 17 to 122 are excised as a propeptide; the sequence is DLAPQPEPLL…VHPDQHVYLA (106 aa). The 87-residue stretch at 36 to 122 folds into the Inhibitor I9 domain; that stretch reads QYIVTLKEGL…VHPDQHVYLA (87 aa). The 291-residue stretch at 131 to 421 folds into the Peptidase S8 domain; that stretch reads RWGLGYMSSK…ERKFTLPKYY (291 aa). Catalysis depends on charge relay system residues Asp169 and His201. Residues Asn248, Asn261, and Asn348 are each glycosylated (N-linked (GlcNAc...) asparagine). The active-site Charge relay system is Ser357. Asn388 carries an N-linked (GlcNAc...) asparagine glycan.

Belongs to the peptidase S8 family.

The protein resides in the secreted. Secreted subtilisin-like serine protease with keratinolytic activity that contributes to pathogenicity. The sequence is that of Subtilisin-like protease 2 (SUB2) from Trichophyton verrucosum (strain HKI 0517).